The primary structure comprises 458 residues: Argininosuccinate lyase (458 aa).

Belongs to the lyase 1 family. Argininosuccinate lyase subfamily.

It is found in the cytoplasm. The catalysed reaction is 2-(N(omega)-L-arginino)succinate = fumarate + L-arginine. It participates in amino-acid biosynthesis; L-arginine biosynthesis; L-arginine from L-ornithine and carbamoyl phosphate: step 3/3. This chain is Argininosuccinate lyase, found in Anoxybacillus flavithermus (strain DSM 21510 / WK1).